Consider the following 152-residue polypeptide: Ribosome maturation factor RimP (152 aa).

This sequence belongs to the RimP family.

The protein resides in the cytoplasm. Required for maturation of 30S ribosomal subunits. This Ectopseudomonas mendocina (strain ymp) (Pseudomonas mendocina) protein is Ribosome maturation factor RimP.